The following is a 152-amino-acid chain: Ubiquitin-activating enzyme E1 Y (152 aa).

C51 serves as the catalytic Glycyl thioester intermediate.

Belongs to the ubiquitin-activating E1 family. Monomer.

The catalysed reaction is ATP + ubiquitin + [E1 ubiquitin-activating enzyme]-L-cysteine = AMP + diphosphate + S-ubiquitinyl-[E1 ubiquitin-activating enzyme]-L-cysteine.. It participates in protein modification; protein ubiquitination. In terms of biological role, activates ubiquitin by first adenylating its C-terminal glycine residue with ATP, and thereafter linking this residue to the side chain of a cysteine residue in E1, yielding a ubiquitin-E1 thioester and free AMP. The Y chromosome form could be involved in the survival and proliferation of differentiating spermatogonia. The protein is Ubiquitin-activating enzyme E1 Y (UBE1Y) of Osphranter rufus (Red kangaroo).